Consider the following 216-residue polypeptide: Phosphoenolpyruvate guanylyltransferase (216 aa).

3 residues coordinate phosphoenolpyruvate: Thr-139, Gly-155, and Ser-158.

This sequence belongs to the CofC family.

It carries out the reaction phosphoenolpyruvate + GTP + H(+) = enolpyruvoyl-2-diphospho-5'-guanosine + diphosphate. It functions in the pathway cofactor biosynthesis; coenzyme F420 biosynthesis. Functionally, guanylyltransferase that catalyzes the activation of phosphoenolpyruvate (PEP) as enolpyruvoyl-2-diphospho-5'-guanosine, via the condensation of PEP with GTP. It is involved in the biosynthesis of coenzyme F420, a hydride carrier cofactor. This Streptomyces avermitilis (strain ATCC 31267 / DSM 46492 / JCM 5070 / NBRC 14893 / NCIMB 12804 / NRRL 8165 / MA-4680) protein is Phosphoenolpyruvate guanylyltransferase.